Consider the following 333-residue polypeptide: Flotillin-like protein FloA (333 aa).

2 helical membrane passes run 8-28 (LMPI…FTFI) and 30-50 (VGLW…TLVG).

Belongs to the flotillin-like FloA family. Homooligomerizes.

It is found in the cell membrane. The protein localises to the membrane raft. In terms of biological role, found in functional membrane microdomains (FMM) that may be equivalent to eukaryotic membrane rafts. FMMs are highly dynamic and increase in number as cells age. Flotillins are thought to be important factors in membrane fluidity. The chain is Flotillin-like protein FloA from Desulfitobacterium hafniense (strain DSM 10664 / DCB-2).